The sequence spans 345 residues: Skn-1 dependent zygotic transcript 15 protein (345 aa).

The F-box domain occupies 11-55; the sequence is AFGLHKLPHLVSDKVVKSMVPMELFTYSMVAEETKALVKRLFKKV.

Its function is as follows. May have a role in embryogenesis. The sequence is that of Skn-1 dependent zygotic transcript 15 protein (sdz-15) from Caenorhabditis elegans.